A 130-amino-acid chain; its full sequence is Protein NrdI (130 aa).

It belongs to the NrdI family.

Its function is as follows. Probably involved in ribonucleotide reductase function. This Bacillus velezensis (strain DSM 23117 / BGSC 10A6 / LMG 26770 / FZB42) (Bacillus amyloliquefaciens subsp. plantarum) protein is Protein NrdI.